The primary structure comprises 337 residues: Lipoyl synthase (337 aa).

Residues Cys-81, Cys-86, Cys-92, Cys-107, Cys-111, Cys-114, and Ser-323 each coordinate [4Fe-4S] cluster. One can recognise a Radical SAM core domain in the interval 93–312 (FSHGTATFMI…EDYGNALGFS (220 aa)).

Belongs to the radical SAM superfamily. Lipoyl synthase family. Requires [4Fe-4S] cluster as cofactor.

It localises to the cytoplasm. The catalysed reaction is [[Fe-S] cluster scaffold protein carrying a second [4Fe-4S](2+) cluster] + N(6)-octanoyl-L-lysyl-[protein] + 2 oxidized [2Fe-2S]-[ferredoxin] + 2 S-adenosyl-L-methionine + 4 H(+) = [[Fe-S] cluster scaffold protein] + N(6)-[(R)-dihydrolipoyl]-L-lysyl-[protein] + 4 Fe(3+) + 2 hydrogen sulfide + 2 5'-deoxyadenosine + 2 L-methionine + 2 reduced [2Fe-2S]-[ferredoxin]. It functions in the pathway protein modification; protein lipoylation via endogenous pathway; protein N(6)-(lipoyl)lysine from octanoyl-[acyl-carrier-protein]: step 2/2. Functionally, catalyzes the radical-mediated insertion of two sulfur atoms into the C-6 and C-8 positions of the octanoyl moiety bound to the lipoyl domains of lipoate-dependent enzymes, thereby converting the octanoylated domains into lipoylated derivatives. In Xanthomonas axonopodis pv. citri (strain 306), this protein is Lipoyl synthase.